Reading from the N-terminus, the 157-residue chain is uncharacterized protein (157 aa).

The signal sequence occupies residues 1–26 (MEALRRAHEVALRLLLCRPWASRAAA).

It is found in the secreted. This is an uncharacterized protein from Homo sapiens (Human).